Here is a 101-residue protein sequence, read N- to C-terminus: NADH-quinone oxidoreductase subunit K (101 aa).

Transmembrane regions (helical) follow at residues 4–24, 30–50, and 61–81; these read LAHFLVLGAILFAISIVGIFL, IVLLMALELLLLAVNMNFVAF, and VFVFFILTVAAAESAIGLAIL.

This sequence belongs to the complex I subunit 4L family. NDH-1 is composed of 14 different subunits. Subunits NuoA, H, J, K, L, M, N constitute the membrane sector of the complex.

Its subcellular location is the cell inner membrane. It carries out the reaction a quinone + NADH + 5 H(+)(in) = a quinol + NAD(+) + 4 H(+)(out). Functionally, NDH-1 shuttles electrons from NADH, via FMN and iron-sulfur (Fe-S) centers, to quinones in the respiratory chain. The immediate electron acceptor for the enzyme in this species is believed to be ubiquinone. Couples the redox reaction to proton translocation (for every two electrons transferred, four hydrogen ions are translocated across the cytoplasmic membrane), and thus conserves the redox energy in a proton gradient. The sequence is that of NADH-quinone oxidoreductase subunit K from Cupriavidus metallidurans (strain ATCC 43123 / DSM 2839 / NBRC 102507 / CH34) (Ralstonia metallidurans).